Reading from the N-terminus, the 349-residue chain is Transmembrane protein 255A (349 aa).

4 helical membrane passes run 30-50 (IYVTVTLLIVSVLILTVGLAA), 57-77 (VTVGGYYPGVILGFGSFLGII), 89-109 (LVASIVFISFGVIAAFCCAIV), and 226-246 (TILNIVGLFLGIITAAVLGGF). The segment at 301 to 329 (VFPSSPPSGLSDEPQSASPSPSYMWSSSA) is disordered. The span at 316-329 (SASPSPSYMWSSSA) shows a compositional bias: low complexity.

This sequence belongs to the TMEM255 family.

Its subcellular location is the membrane. This is Transmembrane protein 255A (TMEM255A) from Macaca fascicularis (Crab-eating macaque).